The sequence spans 259 residues: Pimeloyl-[acyl-carrier protein] methyl ester esterase (259 aa).

Substrate is bound by residues tryptophan 18, 78 to 79 (SL), and 139 to 143 (FLALD). The active-site Nucleophile is the serine 78. Residues aspartate 203 and histidine 231 contribute to the active site. Histidine 231 provides a ligand contact to substrate.

This sequence belongs to the AB hydrolase superfamily. Carboxylesterase BioH family. In terms of assembly, monomer.

The protein localises to the cytoplasm. The enzyme catalyses 6-carboxyhexanoyl-[ACP] methyl ester + H2O = 6-carboxyhexanoyl-[ACP] + methanol + H(+). Its pathway is cofactor biosynthesis; biotin biosynthesis. In terms of biological role, the physiological role of BioH is to remove the methyl group introduced by BioC when the pimeloyl moiety is complete. It allows to synthesize pimeloyl-ACP via the fatty acid synthetic pathway through the hydrolysis of the ester bonds of pimeloyl-ACP esters. The chain is Pimeloyl-[acyl-carrier protein] methyl ester esterase from Stenotrophomonas maltophilia (strain K279a).